A 381-amino-acid chain; its full sequence is Queuine tRNA-ribosyltransferase (381 aa).

Catalysis depends on D90, which acts as the Proton acceptor. Substrate is bound by residues 90 to 94 (DSGGF), D144, Q193, and G221. Positions 252–258 (GVGTPEN) are RNA binding. D271 functions as the Nucleophile in the catalytic mechanism. The interval 276–280 (TRNAR) is RNA binding; important for wobble base 34 recognition. The Zn(2+) site is built by C309, C311, C314, and H340.

Belongs to the queuine tRNA-ribosyltransferase family. In terms of assembly, homodimer. Within each dimer, one monomer is responsible for RNA recognition and catalysis, while the other monomer binds to the replacement base PreQ1. It depends on Zn(2+) as a cofactor.

It carries out the reaction 7-aminomethyl-7-carbaguanine + guanosine(34) in tRNA = 7-aminomethyl-7-carbaguanosine(34) in tRNA + guanine. The protein operates within tRNA modification; tRNA-queuosine biosynthesis. Catalyzes the base-exchange of a guanine (G) residue with the queuine precursor 7-aminomethyl-7-deazaguanine (PreQ1) at position 34 (anticodon wobble position) in tRNAs with GU(N) anticodons (tRNA-Asp, -Asn, -His and -Tyr). Catalysis occurs through a double-displacement mechanism. The nucleophile active site attacks the C1' of nucleotide 34 to detach the guanine base from the RNA, forming a covalent enzyme-RNA intermediate. The proton acceptor active site deprotonates the incoming PreQ1, allowing a nucleophilic attack on the C1' of the ribose to form the product. After dissociation, two additional enzymatic reactions on the tRNA convert PreQ1 to queuine (Q), resulting in the hypermodified nucleoside queuosine (7-(((4,5-cis-dihydroxy-2-cyclopenten-1-yl)amino)methyl)-7-deazaguanosine). The sequence is that of Queuine tRNA-ribosyltransferase from Helicobacter hepaticus (strain ATCC 51449 / 3B1).